The following is a 159-amino-acid chain: 6,7-dimethyl-8-ribityllumazine synthase (159 aa).

Residues Phe22, 57 to 59 (AVE), and 81 to 83 (AVI) each bind 5-amino-6-(D-ribitylamino)uracil. 86 to 87 (GT) is a binding site for (2S)-2-hydroxy-3-oxobutyl phosphate. His89 acts as the Proton donor in catalysis. Residue Phe114 coordinates 5-amino-6-(D-ribitylamino)uracil. Arg128 lines the (2S)-2-hydroxy-3-oxobutyl phosphate pocket.

It belongs to the DMRL synthase family. As to quaternary structure, forms an icosahedral capsid composed of 60 subunits, arranged as a dodecamer of pentamers.

The enzyme catalyses (2S)-2-hydroxy-3-oxobutyl phosphate + 5-amino-6-(D-ribitylamino)uracil = 6,7-dimethyl-8-(1-D-ribityl)lumazine + phosphate + 2 H2O + H(+). It participates in cofactor biosynthesis; riboflavin biosynthesis; riboflavin from 2-hydroxy-3-oxobutyl phosphate and 5-amino-6-(D-ribitylamino)uracil: step 1/2. Its function is as follows. Catalyzes the formation of 6,7-dimethyl-8-ribityllumazine by condensation of 5-amino-6-(D-ribitylamino)uracil with 3,4-dihydroxy-2-butanone 4-phosphate. This is the penultimate step in the biosynthesis of riboflavin. The protein is 6,7-dimethyl-8-ribityllumazine synthase of Shewanella denitrificans (strain OS217 / ATCC BAA-1090 / DSM 15013).